Consider the following 305-residue polypeptide: Carbamate kinase (305 aa).

Belongs to the carbamate kinase family.

It localises to the cytoplasm. It catalyses the reaction hydrogencarbonate + NH4(+) + ATP = carbamoyl phosphate + ADP + H2O + H(+). The protein operates within metabolic intermediate metabolism; carbamoyl phosphate degradation; CO(2) and NH(3) from carbamoyl phosphate: step 1/1. This Thermoplasma acidophilum (strain ATCC 25905 / DSM 1728 / JCM 9062 / NBRC 15155 / AMRC-C165) protein is Carbamate kinase (arcC).